A 251-amino-acid chain; its full sequence is uncharacterized protein (251 aa).

The signal sequence occupies residues 1–15 (MSAISSLVLIGWAMC). N225 and N242 each carry an N-linked (GlcNAc...) asparagine glycan.

This is an uncharacterized protein from Encephalitozoon cuniculi (strain GB-M1) (Microsporidian parasite).